Reading from the N-terminus, the 432-residue chain is Serine/threonine-protein phosphatase 2A activator 1 (432 aa).

The tract at residues 322–432 (PYSKVEDEEP…MAPTKAPWAK (111 aa)) is disordered. Over residues 366–389 (TVERLARRDGQRAAREKEEREDRA) the composition is skewed to basic and acidic residues. Over residues 396-412 (TTGAPGATALPPTRAPG) the composition is skewed to low complexity.

This sequence belongs to the PTPA-type PPIase family.

The protein localises to the cytoplasm. It localises to the nucleus. The catalysed reaction is [protein]-peptidylproline (omega=180) = [protein]-peptidylproline (omega=0). PPIases accelerate the folding of proteins. It catalyzes the cis-trans isomerization of proline imidic peptide bonds in oligopeptides. Acts as a regulatory subunit for PP2A-like phosphatases modulating their activity or substrate specificity, probably by inducing a conformational change in the catalytic subunit, a direct target of the PPIase. Can reactivate inactive phosphatase PP2A-phosphatase methylesterase complexes (PP2Ai) in presence of ATP and Mg(2+) by dissociating the inactive form from the complex. The polypeptide is Serine/threonine-protein phosphatase 2A activator 1 (RRD1) (Yarrowia lipolytica (strain CLIB 122 / E 150) (Yeast)).